The following is a 977-amino-acid chain: Serine/threonine-protein kinase/endoribonuclease IRE1 (977 aa).

A signal peptide spans 1–18 (MPARRLLLLLTLLLPGLG). Residues 19–443 (IFGSTSTVTL…EAPVDSMLKD (425 aa)) are Lumenal-facing. N176 carries an N-linked (GlcNAc...) asparagine glycan. A compositionally biased stretch (polar residues) spans 410 to 419 (TSENAPTTVS). The tract at residues 410 to 434 (TSENAPTTVSRDVEEKPAHAPARPE) is disordered. The chain crosses the membrane as a helical span at residues 444 to 464 (MATIILSTFLLIGWVAFIITY). The Cytoplasmic portion of the chain corresponds to 465-977 (PLSMHQQQQL…PQPPVTPDAL (513 aa)). Residues 491–559 (QQQQQLPFHP…PSLEQDDGDE (69 aa)) are disordered. The span at 513–552 (TSGPYSESSGTSSPSTSPRASNHSLCSGSSASKAGSSPSL) shows a compositional bias: low complexity. In terms of domain architecture, Protein kinase spans 571–832 (FCPKDVLGHG…AKHVLKHPFF (262 aa)). Residues 577–585 (LGHGAEGTI), K599, and 643–645 (ELC) each bind ATP. D688 acts as the Proton acceptor in catalysis. Residues 690-693 (KPHN) and D711 each bind ATP. 2 positions are modified to phosphoserine: S724 and S729. The KEN domain maps to 835 to 963 (LEKQLQFFQD…ERLFQPYYFH (129 aa)). An interacts with hydroxy-aryl-aldehyde inhibitors region spans residues 906–907 (NK). Residue T973 is modified to Phosphothreonine.

This sequence belongs to the protein kinase superfamily. Ser/Thr protein kinase family. In terms of assembly, monomer. Homodimer; disulfide-linked; homodimerization takes place in response to endoplasmic reticulum stress and promotes activation of the kinase and endoribonuclease activities. Dimer formation is driven by hydrophobic interactions within the N-terminal luminal domains and stabilized by disulfide bridges. Interacts (via the luminal region) with DNAJB9/ERdj4; interaction takes place in unstressed cells and promotes recruitment of HSPA5/BiP. Interacts (via the luminal region) with HSPA5/BiP; HSPA5/BiP is a negative regulator of the unfolded protein response (UPR) that prevents homodimerization of ERN1/IRE1 and subsequent activation of the protein. Interaction with HSPA5 also competitively inhibits ERN1 interaction with MANF. Interacts with PDIA6, a negative regulator of the UPR; the interaction is direct and disrupts homodimerization. Interacts with DAB2IP (via PH domain); the interaction occurs in a endoplasmic reticulum stress-induced dependent manner and is required for subsequent recruitment of TRAF2 to ERN1/IRE1. Interacts with TAOK3 and TRAF2. Interacts with RNF13. Interacts with LACC1. Interacts (when unphosphorylated) with DDRGK1; interaction is dependent on UFM1 and takes place in response to endoplasmic reticulum stress, regulating ERN1/IRE1-alpha stability. Interacts (via N-terminus) with P4HB/PDIA1; the interaction is enhanced by phosphorylation of P4HB by FAM20C in response to endoplasmic reticulum stress and results in attenuation of ERN1 activity. Interacts with TMBIM6; this interaction inhibits ERN1 activity. Interacts (via luminal domain) with MANF (via C-terminus); the interaction is decreased in the presence of increasing concentrations of Ca(2+). Mg(2+) is required as a cofactor. Post-translationally, autophosphorylated following homodimerization. Autophosphorylation promotes activation of the endoribonuclease domain. In response to ER stress, phosphorylated at Ser-724, Ser-729 and possibly Ser-726; phosphorylation promotes oligomerization and endoribonuclease activity. Dephosphorylated at Ser-724, Ser-729 and possibly Ser-726 by RPAP2 to abort failed ER-stress adaptation and trigger apoptosis. Phosphorylated at Ser-724; in response to the ER stressor tunicamycin. ADP-ribosylated by PARP16 upon ER stress, which increases both kinase and endonuclease activities. Ubiquitously expressed. High levels observed in pancreatic tissue.

The protein resides in the endoplasmic reticulum membrane. The catalysed reaction is L-seryl-[protein] + ATP = O-phospho-L-seryl-[protein] + ADP + H(+). It carries out the reaction L-threonyl-[protein] + ATP = O-phospho-L-threonyl-[protein] + ADP + H(+). With respect to regulation, the kinase domain is activated by trans-autophosphorylation following homodimerization. Kinase activity is required for activation of the endoribonuclease domain. Endoribonuclease activity is specifically inhibited by hydroxy-aryl-aldehydes (HAA). Functionally, serine/threonine-protein kinase and endoribonuclease that acts as a key sensor for the endoplasmic reticulum unfolded protein response (UPR). In unstressed cells, the endoplasmic reticulum luminal domain is maintained in its inactive monomeric state by binding to the endoplasmic reticulum chaperone HSPA5/BiP. Accumulation of misfolded proteins in the endoplasmic reticulum causes release of HSPA5/BiP, allowing the luminal domain to homodimerize, promoting autophosphorylation of the kinase domain and subsequent activation of the endoribonuclease activity. The endoribonuclease activity is specific for XBP1 mRNA and excises 26 nucleotides from XBP1 mRNA. The resulting spliced transcript of XBP1 encodes a transcriptional activator protein that up-regulates expression of UPR target genes. Acts as an upstream signal for ER stress-induced GORASP2-mediated unconventional (ER/Golgi-independent) trafficking of CFTR to cell membrane by modulating the expression and localization of SEC16A. The sequence is that of Serine/threonine-protein kinase/endoribonuclease IRE1 from Homo sapiens (Human).